Consider the following 282-residue polypeptide: Putative lactoylglutathione lyase (282 aa).

At Ala2 the chain carries N-acetylalanine. VOC domains follow at residues 17–141 (RFLH…LIQR) and 147–274 (PLCQ…LVDN). His20 lines the Zn(2+) pocket. Arg24 is a substrate binding site. Glu71 lines the Zn(2+) pocket. Positions 75 and 89 each coordinate substrate. 2 residues coordinate Zn(2+): His89 and Glu137. Glu137 functions as the Proton donor/acceptor in the catalytic mechanism. 254–255 (LG) serves as a coordination point for substrate.

Belongs to the glyoxalase I family. Zn(2+) serves as cofactor.

The enzyme catalyses (R)-S-lactoylglutathione = methylglyoxal + glutathione. The protein operates within secondary metabolite metabolism; methylglyoxal degradation; (R)-lactate from methylglyoxal: step 1/2. Its function is as follows. Catalyzes the conversion of hemimercaptal, formed from methylglyoxal and glutathione, to S-lactoylglutathione. In Brassica oleracea var. gemmifera (Brussel sprouts), this protein is Putative lactoylglutathione lyase.